A 230-amino-acid polypeptide reads, in one-letter code: Large ribosomal subunit protein uL1 (230 aa).

Belongs to the universal ribosomal protein uL1 family. Part of the 50S ribosomal subunit.

Binds directly to 23S rRNA. The L1 stalk is quite mobile in the ribosome, and is involved in E site tRNA release. Its function is as follows. Protein L1 is also a translational repressor protein, it controls the translation of the L11 operon by binding to its mRNA. The chain is Large ribosomal subunit protein uL1 from Nitrosospira multiformis (strain ATCC 25196 / NCIMB 11849 / C 71).